The primary structure comprises 531 residues: T-complex protein 1 subunit zeta-2 (531 aa).

This sequence belongs to the TCP-1 chaperonin family. As to quaternary structure, component of the chaperonin-containing T-complex (TRiC), a heterooligomeric complex of about 850 to 900 kDa that forms two stacked rings, 12 to 16 nm in diameter. Testis specific.

It localises to the cytoplasm. Component of the chaperonin-containing T-complex (TRiC), a molecular chaperone complex that assists the folding of proteins upon ATP hydrolysis. The polypeptide is T-complex protein 1 subunit zeta-2 (Cct6b) (Mus musculus (Mouse)).